The following is a 314-amino-acid chain: tRNA dimethylallyltransferase (314 aa).

12–19 is a binding site for ATP; the sequence is GPTAGGKS. 14-19 contacts substrate; it reads TAGGKS. The interval 37-40 is interaction with substrate tRNA; that stretch reads DSMQ.

The protein belongs to the IPP transferase family. As to quaternary structure, monomer. The cofactor is Mg(2+).

The catalysed reaction is adenosine(37) in tRNA + dimethylallyl diphosphate = N(6)-dimethylallyladenosine(37) in tRNA + diphosphate. Catalyzes the transfer of a dimethylallyl group onto the adenine at position 37 in tRNAs that read codons beginning with uridine, leading to the formation of N6-(dimethylallyl)adenosine (i(6)A). This chain is tRNA dimethylallyltransferase, found in Rhodospirillum centenum (strain ATCC 51521 / SW).